The primary structure comprises 490 residues: tRNA-guanine(15) transglycosylase (490 aa).

The active-site Nucleophile is the aspartate 90. Positions 125 and 193 each coordinate substrate. Zn(2+) is bound by residues cysteine 276, cysteine 278, and cysteine 281.

Belongs to the archaeosine tRNA-ribosyltransferase family. The cofactor is Zn(2+).

It catalyses the reaction guanosine(15) in tRNA + 7-cyano-7-deazaguanine = 7-cyano-7-carbaguanosine(15) in tRNA + guanine. The protein operates within tRNA modification; archaeosine-tRNA biosynthesis. Its function is as follows. Exchanges the guanine residue with 7-cyano-7-deazaguanine (preQ0) at position 15 in the dihydrouridine loop (D-loop) of archaeal tRNAs. The sequence is that of tRNA-guanine(15) transglycosylase from Methanosarcina mazei (strain ATCC BAA-159 / DSM 3647 / Goe1 / Go1 / JCM 11833 / OCM 88) (Methanosarcina frisia).